The following is a 135-amino-acid chain: Large ribosomal subunit protein eL32 (135 aa).

It belongs to the eukaryotic ribosomal protein eL32 family.

This chain is Large ribosomal subunit protein eL32, found in Methanococcus maripaludis (strain C7 / ATCC BAA-1331).